The sequence spans 667 residues: Transketolase (667 aa).

Histidine 27 lines the substrate pocket. Thiamine diphosphate is bound by residues histidine 67 and 115 to 117 (GPL). Aspartate 156 contacts Mg(2+). Thiamine diphosphate is bound by residues glycine 157 and asparagine 186. Mg(2+)-binding residues include asparagine 186 and isoleucine 188. Substrate is bound by residues histidine 262, arginine 357, and serine 384. Histidine 262 contacts thiamine diphosphate. Glutamate 411 serves as the catalytic Proton donor. Thiamine diphosphate is bound at residue phenylalanine 437. 3 residues coordinate substrate: histidine 461, aspartate 469, and arginine 520.

This sequence belongs to the transketolase family. As to quaternary structure, homodimer. It depends on Mg(2+) as a cofactor. Ca(2+) is required as a cofactor. Requires Mn(2+) as cofactor. Co(2+) serves as cofactor. The cofactor is thiamine diphosphate.

It carries out the reaction D-sedoheptulose 7-phosphate + D-glyceraldehyde 3-phosphate = aldehydo-D-ribose 5-phosphate + D-xylulose 5-phosphate. In terms of biological role, catalyzes the transfer of a two-carbon ketol group from a ketose donor to an aldose acceptor, via a covalent intermediate with the cofactor thiamine pyrophosphate. This chain is Transketolase (tkt), found in Bacillus subtilis (strain 168).